A 176-amino-acid chain; its full sequence is Protein GrpE (176 aa).

Belongs to the GrpE family. As to quaternary structure, homodimer.

It localises to the cytoplasm. Functionally, participates actively in the response to hyperosmotic and heat shock by preventing the aggregation of stress-denatured proteins, in association with DnaK and GrpE. It is the nucleotide exchange factor for DnaK and may function as a thermosensor. Unfolded proteins bind initially to DnaJ; upon interaction with the DnaJ-bound protein, DnaK hydrolyzes its bound ATP, resulting in the formation of a stable complex. GrpE releases ADP from DnaK; ATP binding to DnaK triggers the release of the substrate protein, thus completing the reaction cycle. Several rounds of ATP-dependent interactions between DnaJ, DnaK and GrpE are required for fully efficient folding. The chain is Protein GrpE from Rickettsia bellii (strain OSU 85-389).